Reading from the N-terminus, the 631-residue chain is MPTTFKEIPRERPVTPLLDQADTPHGLRRLGEAELETLADELRLELLYSVGQTGGHFGAGLGVIELTIALHYVFDTPDDRLVWDVGHQAYPHKILTGRRARMSTLRQKDGVAAFPRRSESEYDTFGVGHSSTSISAALGMAIASRLQGSERKSIAVIGDGALTAGMAFEALNHAPEVAANMLVILNDNDMSISRNVGGLSNYLAKILSSRTYTSMREGSKKVLSRLPGAWEIARRTEEYAKGMLVPGTLFEELGWNYIGPIDGHDLPTLIATLRNMRDLKGPQFLHVVTKKGKGFAPAEVDPIGYHAITKLEPLNAPVSVQKKVSSPKYSGVFGQWICDMAEADSRLVGITPAMKEGSDLVDFSERFPERYFDVAIAEQHAVTLAAGMACEGSKPVVAIYSTFLQRGYDQLVHDVAVQNLDVLFAIDRAGLVGEDGPTHAGSFDLSYLRCIPGIVVMTPSDENELRKLLSTGYLHTGPAAVRYPRGTGPNAVIEANLDPVEIGKGVVRRQGQGVAILVFGVQLAEALVVAEKLDATVIDMRFVKPLDEALVRETAASHELLVTLEENAVMGGAGAAVSEFLARANILKSVLHLGLPDVYVEHAKPAQMLAECGLDAEGIEAAINERLALIG.

Thiamine diphosphate-binding positions include histidine 87 and 128–130; that span reads GHS. Residue aspartate 159 participates in Mg(2+) binding. Thiamine diphosphate contacts are provided by residues 160–161, asparagine 188, phenylalanine 295, and glutamate 378; that span reads GA. Asparagine 188 contacts Mg(2+).

This sequence belongs to the transketolase family. DXPS subfamily. In terms of assembly, homodimer. Mg(2+) is required as a cofactor. Thiamine diphosphate serves as cofactor.

It catalyses the reaction D-glyceraldehyde 3-phosphate + pyruvate + H(+) = 1-deoxy-D-xylulose 5-phosphate + CO2. It functions in the pathway metabolic intermediate biosynthesis; 1-deoxy-D-xylulose 5-phosphate biosynthesis; 1-deoxy-D-xylulose 5-phosphate from D-glyceraldehyde 3-phosphate and pyruvate: step 1/1. Catalyzes the acyloin condensation reaction between C atoms 2 and 3 of pyruvate and glyceraldehyde 3-phosphate to yield 1-deoxy-D-xylulose-5-phosphate (DXP). The chain is 1-deoxy-D-xylulose-5-phosphate synthase from Pseudomonas syringae pv. tomato (strain ATCC BAA-871 / DC3000).